The chain runs to 126 residues: uncharacterized protein (126 aa).

A helical membrane pass occupies residues 48 to 68; that stretch reads ILCMFPWQCVVYVFSNFVWLV.

The protein resides in the membrane. This is an uncharacterized protein from Homo sapiens (Human).